The chain runs to 729 residues: Catalase-peroxidase (729 aa).

Residues 1 to 20 (MHNGSNGSVEQRDSMPETSR) form a disordered region. A compositionally biased stretch (basic and acidic residues) spans 10–20 (EQRDSMPETSR). A cross-link (tryptophyl-tyrosyl-methioninium (Trp-Tyr) (with M-240)) is located at residues 91 to 214 (WHAAGTYRTT…LGATVMGLIY (124 aa)). The active-site Proton acceptor is the His-92. Residues 214–240 (YVNPEGPESTPDPEWSAQRIRKSFGRM) constitute a cross-link (tryptophyl-tyrosyl-methioninium (Tyr-Met) (with W-91)). His-255 contributes to the heme b binding site.

Belongs to the peroxidase family. Peroxidase/catalase subfamily. In terms of assembly, homodimer or homotetramer. The cofactor is heme b. In terms of processing, formation of the three residue Trp-Tyr-Met cross-link is important for the catalase, but not the peroxidase activity of the enzyme.

It catalyses the reaction H2O2 + AH2 = A + 2 H2O. The enzyme catalyses 2 H2O2 = O2 + 2 H2O. Bifunctional enzyme with both catalase and broad-spectrum peroxidase activity. This Salinibacter ruber (strain DSM 13855 / M31) protein is Catalase-peroxidase.